The primary structure comprises 429 residues: MSKSLQAIRGMNDILPEQTPAWRYLERTFAGLLDGYGYSEIRLPILEFTELFARGIGEGTDVVDKEMYTFLDRNGESLTMRPEGTAGCVRAVLEHGLSGGGQVQKLWYTGPMFRYEKPQKGRYRQFHQIGVEVFNLPGPDIDAELIILTWRLWQKLGMADAVTLQLNTLGSSEARARYREALVAYLQERFEQLDEDSQRRMTTNPLRILDSKVESTQALLVGAPTLHDYLDEESIAHFEGLKARLDAVGLRYEINQKLVRGLDYYCRTAFEWVTDKLGAQGTVCGGGRYDGLVSQFGGKPTPGVGFAMGVERLVLLLETLGVIPAELNRPADLYVCAFGEPAELAALTLAEQLRSAIPGIRLLVNAGAGSFKSQFKKADKSGARFALILGEDEVANRVVGFKPLRDEGEQQSIAWDALPEHLAACLAQA.

It belongs to the class-II aminoacyl-tRNA synthetase family. Homodimer.

It is found in the cytoplasm. The catalysed reaction is tRNA(His) + L-histidine + ATP = L-histidyl-tRNA(His) + AMP + diphosphate + H(+). The polypeptide is Histidine--tRNA ligase (Pseudomonas aeruginosa (strain UCBPP-PA14)).